A 530-amino-acid chain; its full sequence is Testis-expressed protein 44 (530 aa).

The segment covering 1-10 (MTAEPLEDPE) has biased composition (acidic residues). 4 disordered regions span residues 1–85 (MTAE…FIRT), 207–233 (ATSAVKDESPDIPHQGQDNPEETTSLL), 256–290 (ENNRTSRSRTVSPSDSQTQEKTLGNPNVPEGQPVL), and 305–384 (QTSV…SPDF). Polar residues-rich tracts occupy residues 11-26 (ASSSSTHDLPEASSDN), 222-233 (GQDNPEETTSLL), and 257-280 (NNRTSRSRTVSPSDSQTQEKTLGN). Residues 365–381 (PPDPPDPGSPGGSPPHS) are compositionally biased toward pro residues. The residue at position 468 (Ser-468) is a Phosphoserine.

The protein resides in the cytoplasm. This Mus musculus (Mouse) protein is Testis-expressed protein 44 (Tex44).